A 361-amino-acid polypeptide reads, in one-letter code: Free fatty acid receptor 4 (361 aa).

The tract at residues 1 to 21 is disordered; the sequence is MSPECAQTTGPGPSRTPDQVN. Over 1-45 the chain is Extracellular; it reads MSPECAQTTGPGPSRTPDQVNRTHFPFFSDVKGDHRLVLSVLETT. N-linked (GlcNAc...) asparagine glycosylation occurs at Asn-21. Residues 46–66 form a helical membrane-spanning segment; sequence VLGLIFVVSLLGNVCALVLVV. Residues 67–77 are Cytoplasmic-facing; the sequence is RRRRRGATVSL. The chain crosses the membrane as a helical span at residues 78–98; the sequence is VLNLFCADLLFTSAIPLVLVV. Topologically, residues 99-103 are extracellular; that stretch reads RWTEA. A helical transmembrane segment spans residues 104 to 124; it reads WLLGPVVCHLLFYVMTMSGSV. A disulfide bridge connects residues Cys-111 and Cys-194. Topologically, residues 125–156 are cytoplasmic; that stretch reads TILTLAAVSLERMVCIVRLRRGLSGPGRRTQA. Residues 157–177 traverse the membrane as a helical segment; sequence ALLAFIWGYSALAALPLCILF. Residues 178–204 lie on the Extracellular side of the membrane; that stretch reads RVVPQRLPGGDQEIPICTLDWPNRIGE. A helical transmembrane segment spans residues 205–225; sequence ISWDVFFVTLNFLVPGLVIVI. The Cytoplasmic portion of the chain corresponds to 226–268; the sequence is SYSKILQITKASRKRLTLSLAYSESHQIRVSQQDYRLFRTLFL. Residues 269–289 traverse the membrane as a helical segment; that stretch reads LMVSFFIMWSPIIITILLILI. Residues 290–295 lie on the Extracellular side of the membrane; it reads QNFRQD. A helical transmembrane segment spans residues 296–316; it reads LVIWPSLFFWVVAFTFANSAL. Topologically, residues 317 to 361 are cytoplasmic; that stretch reads NPILYNMSLFRSEWRKIFCCFFFPEKGAIFTETSIRRNDLSVIST. Phosphothreonine occurs at positions 347 and 349. 3 positions are modified to phosphoserine: Ser-350, Ser-357, and Ser-360.

It belongs to the G-protein coupled receptor 1 family. In terms of assembly, interacts (via C-terminus) with ARRB2 following LCFAs stimulation. In terms of processing, phosphorylated at two clusters of Ser and Thr residues located in the intracellular C-terminus. Prerequisite for FFAR4 internalization via an ARRB2-dependent pathway.

It localises to the cell membrane. It is found in the endosome membrane. The protein resides in the lysosome membrane. The protein localises to the cell projection. Its subcellular location is the cilium membrane. Its function is as follows. G-protein-coupled receptor for long-chain fatty acids (LCFAs) with a major role in adipogenesis, energy metabolism and inflammation. Signals via G-protein and beta-arrestin pathways. LCFAs sensing initiates activation of phosphoinositidase C-linked G proteins GNAQ and GNA11 (G(q)/G(11)), inducing a variety of cellular responses via second messenger pathways such as intracellular calcium mobilization, modulation of cyclic adenosine monophosphate (cAMP) production, and mitogen-activated protein kinases (MAPKs). After LCFAs binding, associates with beta-arrestin ARRB2 that acts as an adapter protein coupling the receptor to specific downstream signaling pathways, as well as mediating receptor endocytosis. In response to dietary fats, plays an important role in the regulation of adipocyte proliferation and differentiation. Acts as a receptor for omega-3 polyunsaturated fatty acids (PUFAs) at primary cilium of perivascular preadipocytes, initiating an adipogenic program via cAMP and CTCF-dependent chromatin remodeling that ultimately results in transcriptional activation of adipogenic genes and cell cycle entry. Induces differentiation of brown and beige adipocytes probably via autocrine and endocrine functions of FGF21 hormone. Contributes to the thermogenic activation of brown adipose tissue and the browning of white adipose tissue. Activates brown adipocytes by initiating intracellular calcium signaling leading to mitochondrial depolarization and fission, and overall increased mitochondrial respiration. Consequently stimulates fatty acid uptake and oxidation in mitochondria together with UCP1-mediated thermogenic respiration, eventually reducing fat mass. Regulates bi-potential differentiation of bone marrow mesenchymal stem cells toward osteoblasts or adipocytes likely by up-regulating distinct integrins. In response to dietary fats regulates hormone secretion and appetite. Stimulates GIP and GLP1 secretion from enteroendocrine cells as well as GCG secretion in pancreatic alpha cells, thereby playing a role in the regulation of blood glucose levels. Negatively regulates glucose-induced SST secretion in pancreatic delta cells. Mediates LCFAs inhibition of GHRL secretion, an appetite-controlling hormone. In taste buds, contributes to sensing of dietary fatty acids by the gustatory system. During the inflammatory response, promotes anti-inflammatory M2 macrophage differentiation in adipose tissue. Mediates the anti-inflammatory effects of omega-3 PUFAs via inhibition of NLRP3 inflammasome activation. In this pathway, interacts with adapter protein ARRB2 and inhibits the priming step triggered by Toll-like receptors (TLRs) at the level of TAK1 and TAB1. Further inhibits the activation step when ARRB2 directly associates with NLRP3, leading to inhibition of pro-inflammatory cytokine release. Mediates LCFAs anti-apoptotic effects. This chain is Free fatty acid receptor 4 (Ffar4), found in Rattus norvegicus (Rat).